An 854-amino-acid chain; its full sequence is Envelope glycoprotein gp160 (854 aa).

The signal sequence occupies residues 1 to 31; sequence MKVMEKKKRDWNSLSIITIITIILLTPCLTS. The Extracellular portion of the chain corresponds to 32-675; it reads ELWVTVYYGV…ITKWLWYIKI (644 aa). Cystine bridges form between cysteine 53–cysteine 73, cysteine 118–cysteine 203, cysteine 125–cysteine 194, cysteine 130–cysteine 155, cysteine 216–cysteine 245, and cysteine 226–cysteine 237. Residues 130–154 are V1; that stretch reads CSKANFSQAKNLTNQTSSPPLEMKN. Residues asparagine 134, asparagine 140, asparagine 143, asparagine 154, asparagine 158, asparagine 186, and asparagine 195 are each glycosylated (N-linked (GlcNAc...) asparagine; by host). The V2 stretch occupies residues 155 to 194; that stretch reads CSFNVTTELRDKKKQVYSLFYVEDVVNLGNENNTYRIINC. N-linked (GlcNAc...) asparagine; by host glycans are attached at residues asparagine 239, asparagine 260, asparagine 267, asparagine 274, asparagine 299, asparagine 331, asparagine 336, asparagine 351, and asparagine 356. The interval 294–327 is V3; it reads CHRPGNNTRGEVQIGPGMTFYNIENVVGDTRSAY. A disulfide bridge links cysteine 294 with cysteine 328. A CD4-binding loop region spans residues 362-372; it reads ASGGDPEVTHH. 2 cysteine pairs are disulfide-bonded: cysteine 376-cysteine 429 and cysteine 383-cysteine 402. Positions 383-402 are V4; it reads CNTSQIFTDNITNGIIILPC. Residues asparagine 384, asparagine 392, asparagine 426, asparagine 432, asparagine 446, and asparagine 450 are each glycosylated (N-linked (GlcNAc...) asparagine; by host). V5 stretches follow at residues 445 to 456 and 447 to 456; these read TNNSGNLTFRPT and NSGNLTFRPT. Residues 501-522 are fusion peptide; sequence AAFGLGALFLGFLGAAGSTMGA. The immunosuppression stretch occupies residues 564-582; that stretch reads KQLQARLLAVERYLQDQQI. Cysteine 588 and cysteine 594 are disulfide-bonded. Residues asparagine 601, asparagine 608, asparagine 616, and asparagine 628 are each glycosylated (N-linked (GlcNAc...) asparagine; by host). Residues 624-658 adopt a coiled-coil conformation; that stretch reads KLVSNYTGKIFGLLEEAQSQQEKNERDLLELDQWA. The MPER; binding to GalCer stretch occupies residues 653-674; sequence ELDQWASLWNWFDITKWLWYIK. Residues 676 to 696 form a helical membrane-spanning segment; the sequence is FLMAVGGIIGLRIIMTVFSVV. The Cytoplasmic segment spans residues 697–854; that stretch reads RRVRQGYSPL…IRQGLERALL (158 aa). Positions 703–706 match the YXXL motif; contains endocytosis signal motif; it reads YSPL. Residues 853–854 carry the Di-leucine internalization motif motif; that stretch reads LL.

This sequence belongs to the HIV-1 env protein family. The mature envelope protein (Env) consists of a homotrimer of non-covalently associated gp120-gp41 heterodimers. The resulting complex protrudes from the virus surface as a spike. There seems to be as few as 10 spikes on the average virion. Interacts with host CD4, CCR5 and CXCR4. Gp120 also interacts with the C-type lectins CD209/DC-SIGN and CLEC4M/DC-SIGNR (collectively referred to as DC-SIGN(R)). Gp120 and gp41 interact with GalCer. Gp120 interacts with host ITGA4/ITGB7 complex; on CD4+ T-cells, this interaction results in rapid activation of integrin ITGAL/LFA-1, which facilitates efficient cell-to-cell spreading of HIV-1. Gp120 interacts with cell-associated heparan sulfate; this interaction increases virus infectivity on permissive cells and may be involved in infection of CD4- cells. In terms of assembly, the mature envelope protein (Env) consists of a homotrimer of non-covalently associated gp120-gp41 heterodimers. The resulting complex protrudes from the virus surface as a spike. There seems to be as few as 10 spikes on the average virion. In terms of processing, highly glycosylated by host. The high number of glycan on the protein is reffered to as 'glycan shield' because it contributes to hide protein sequence from adaptive immune system. Palmitoylation of the transmembrane protein and of Env polyprotein (prior to its proteolytic cleavage) is essential for their association with host cell membrane lipid rafts. Palmitoylation is therefore required for envelope trafficking to classical lipid rafts, but not for viral replication. Post-translationally, specific enzymatic cleavages in vivo yield mature proteins. Envelope glycoproteins are synthesized as an inactive precursor that is heavily N-glycosylated and processed likely by host cell furin in the Golgi to yield the mature SU and TM proteins. The cleavage site between SU and TM requires the minimal sequence [KR]-X-[KR]-R. About 2 of the 9 disulfide bonds of gp41 are reduced by P4HB/PDI, following binding to CD4 receptor.

It is found in the virion membrane. Its subcellular location is the host cell membrane. The protein resides in the host endosome membrane. In terms of biological role, attaches the virus to the host lymphoid cell by binding to the primary receptor CD4. This interaction induces a structural rearrangement creating a high affinity binding site for a chemokine coreceptor like CXCR4 and/or CCR5. Acts as a ligand for CD209/DC-SIGN and CLEC4M/DC-SIGNR, which are respectively found on dendritic cells (DCs), and on endothelial cells of liver sinusoids and lymph node sinuses. These interactions allow capture of viral particles at mucosal surfaces by these cells and subsequent transmission to permissive cells. HIV subverts the migration properties of dendritic cells to gain access to CD4+ T-cells in lymph nodes. Virus transmission to permissive T-cells occurs either in trans (without DCs infection, through viral capture and transmission), or in cis (following DCs productive infection, through the usual CD4-gp120 interaction), thereby inducing a robust infection. In trans infection, bound virions remain infectious over days and it is proposed that they are not degraded, but protected in non-lysosomal acidic organelles within the DCs close to the cell membrane thus contributing to the viral infectious potential during DCs' migration from the periphery to the lymphoid tissues. On arrival at lymphoid tissues, intact virions recycle back to DCs' cell surface allowing virus transmission to CD4+ T-cells. Its function is as follows. Acts as a class I viral fusion protein. Under the current model, the protein has at least 3 conformational states: pre-fusion native state, pre-hairpin intermediate state, and post-fusion hairpin state. During fusion of viral and target intracellular membranes, the coiled coil regions (heptad repeats) assume a trimer-of-hairpins structure, positioning the fusion peptide in close proximity to the C-terminal region of the ectodomain. The formation of this structure appears to drive apposition and subsequent fusion of viral and target cell membranes. Complete fusion occurs in host cell endosomes and is dynamin-dependent, however some lipid transfer might occur at the plasma membrane. The virus undergoes clathrin-dependent internalization long before endosomal fusion, thus minimizing the surface exposure of conserved viral epitopes during fusion and reducing the efficacy of inhibitors targeting these epitopes. Membranes fusion leads to delivery of the nucleocapsid into the cytoplasm. Functionally, oligomerizes in the host endoplasmic reticulum into predominantly trimers. In a second time, gp160 transits in the host Golgi, where glycosylation is completed. The precursor is then proteolytically cleaved in the trans-Golgi and thereby activated by cellular furin or furin-like proteases to produce gp120 and gp41. The chain is Envelope glycoprotein gp160 from Pan (chimpanzees).